Here is a 230-residue protein sequence, read N- to C-terminus: 3-beta-hydroxysteroid-Delta(8),Delta(7)-isomerase (230 aa).

At T2 the chain carries N-acetylthreonine. 4 helical membrane passes run W29 to L49, L66 to Y86, M121 to L141, and F185 to F205. The 144-residue stretch at G61–V204 folds into the EXPERA domain.

This sequence belongs to the EBP family. Expressed in liver.

It is found in the endoplasmic reticulum membrane. The protein resides in the nucleus envelope. It localises to the cytoplasmic vesicle. The enzyme catalyses lathosterol = 5alpha-cholest-8-en-3beta-ol. The catalysed reaction is zymosterol = 5alpha-cholesta-7,24-dien-3beta-ol. It catalyses the reaction 5,6alpha-epoxy-5alpha-cholestan-3beta-ol + H2O = 5alpha-cholestane-3beta,5,6beta-triol. It carries out the reaction 5,6beta-epoxy-5beta-cholestan-3beta-ol + H2O = 5alpha-cholestane-3beta,5,6beta-triol. It functions in the pathway steroid biosynthesis; cholesterol biosynthesis. With respect to regulation, enzymatic activity is induced by 25-hydroxycholesterol, cholestyramine and lovastatin. Functionally, isomerase that catalyzes the conversion of Delta(8)-sterols to their corresponding Delta(7)-isomers. In terms of biological role, component of the microsomal antiestrogen binding site (AEBS), a multiproteic complex at the ER membrane that consists of an association between EBP and 7-dehydrocholesterol reductase/DHCR7. This complex is responsible for cholesterol-5,6-epoxide hydrolase (ChEH) activity, which consists in the hydration of cholesterol-5,6-epoxides (5,6-EC) into cholestane-3beta,5alpha,6beta-triol (CT). The precise role of each component of this complex has not been described yet. In Rattus norvegicus (Rat), this protein is 3-beta-hydroxysteroid-Delta(8),Delta(7)-isomerase.